The primary structure comprises 659 residues: MGEEPVPADKALGKKFKKKNASWSIEESEALYRVEAWGAPYFAINAAGNITVSPNGDRGGSLDLLELVEALRQRKLGLPLLIRFSDILADRLERLNSCFAKAIARYNYPNTYQAVYPVKCNQQRHLVEALVRFGQTSQCGLEAGSKPELMIALATLPPPLDRQDKHTKPLIICNGYKDQDYLETALLAKRLGHRPIIIIEQLRELEWVLHISQQLNIKPMLGVRARLSCQSLKSSEISSGNGDRAKLGLTMPDIVTVIHRLEENNCLDCLKMLHFHLGTQVSDIALIKEAMREASQLYVELVKLGAKMRYLNVGGGLAVDYDGSKTNYPASKNYNMQNYANDIVAAIQDACELGQVSPPILVSESGRAIMAHQSVLVFDVLGSNQTGFSEPHPPDENAHPLLKNLWECYETITAEQYQEQYHDALQLKTEASSLFNFGYLSLTERGQAEQIHWACCRKIFEITRQLEYIPEDFQALDKIMTDIYYVNLSVFQSAPESWSLDQLFPILPIHHLNEKPSQRVILADLTCDSDGKIDRFIDLWDVKSYLEVHPLENDGNPYYLGMFLVGAYQEIMGNLHNLFGDINVVHIATTPQGYQIESVVRGDTMTEVLGYVQYDSDDLLEGLRRHTELALSNGQITLEESRRLLEDYEQSLRRYTYLS.

Residue Lys-119 is modified to N6-(pyridoxal phosphate)lysine. 311–321 (LNVGGGLAVDY) lines the substrate pocket.

It belongs to the Orn/Lys/Arg decarboxylase class-II family. SpeA subfamily. Requires Mg(2+) as cofactor. The cofactor is pyridoxal 5'-phosphate.

The enzyme catalyses L-arginine + H(+) = agmatine + CO2. Catalyzes the biosynthesis of agmatine from arginine. This Synechocystis sp. (strain ATCC 27184 / PCC 6803 / Kazusa) protein is Biosynthetic arginine decarboxylase 2 (speA2).